The chain runs to 107 residues: Integration host factor subunit beta (107 aa).

Residues 78 to 107 (PHFKPGKELRERVDGRAGEPLKADEPDDER) are disordered. The segment covering 82–101 (PGKELRERVDGRAGEPLKAD) has biased composition (basic and acidic residues).

It belongs to the bacterial histone-like protein family. As to quaternary structure, heterodimer of an alpha and a beta chain.

Functionally, this protein is one of the two subunits of integration host factor, a specific DNA-binding protein that functions in genetic recombination as well as in transcriptional and translational control. This chain is Integration host factor subunit beta, found in Burkholderia multivorans (strain ATCC 17616 / 249).